We begin with the raw amino-acid sequence, 156 residues long: MNLNATLFAQMVVFLILAWFTMKFVWPPLINALDERSKKIADGLSAAEKGKLELEAAHKRVDQELSQARNEGQQRIADAEKRAVAVADEIKAQAQAEAARIIAQAKADADQQIVKAREALRGEVAALAVKGAEQILKREVDQAAHADLLNQLKAEL.

A helical transmembrane segment spans residues 7 to 27 (LFAQMVVFLILAWFTMKFVWP).

This sequence belongs to the ATPase B chain family. In terms of assembly, F-type ATPases have 2 components, F(1) - the catalytic core - and F(0) - the membrane proton channel. F(1) has five subunits: alpha(3), beta(3), gamma(1), delta(1), epsilon(1). F(0) has three main subunits: a(1), b(2) and c(10-14). The alpha and beta chains form an alternating ring which encloses part of the gamma chain. F(1) is attached to F(0) by a central stalk formed by the gamma and epsilon chains, while a peripheral stalk is formed by the delta and b chains.

The protein resides in the cell inner membrane. F(1)F(0) ATP synthase produces ATP from ADP in the presence of a proton or sodium gradient. F-type ATPases consist of two structural domains, F(1) containing the extramembraneous catalytic core and F(0) containing the membrane proton channel, linked together by a central stalk and a peripheral stalk. During catalysis, ATP synthesis in the catalytic domain of F(1) is coupled via a rotary mechanism of the central stalk subunits to proton translocation. In terms of biological role, component of the F(0) channel, it forms part of the peripheral stalk, linking F(1) to F(0). The sequence is that of ATP synthase subunit b from Paraburkholderia phymatum (strain DSM 17167 / CIP 108236 / LMG 21445 / STM815) (Burkholderia phymatum).